The chain runs to 87 residues: Translation initiation factor IF-1 2 (87 aa).

Positions 1–72 (MAKEELLELD…TKGRINFRHK (72 aa)) constitute an S1-like domain.

This sequence belongs to the IF-1 family. As to quaternary structure, component of the 30S ribosomal translation pre-initiation complex which assembles on the 30S ribosome in the order IF-2 and IF-3, IF-1 and N-formylmethionyl-tRNA(fMet); mRNA recruitment can occur at any time during PIC assembly.

The protein resides in the cytoplasm. One of the essential components for the initiation of protein synthesis. Stabilizes the binding of IF-2 and IF-3 on the 30S subunit to which N-formylmethionyl-tRNA(fMet) subsequently binds. Helps modulate mRNA selection, yielding the 30S pre-initiation complex (PIC). Upon addition of the 50S ribosomal subunit IF-1, IF-2 and IF-3 are released leaving the mature 70S translation initiation complex. The protein is Translation initiation factor IF-1 2 of Burkholderia vietnamiensis (strain G4 / LMG 22486) (Burkholderia cepacia (strain R1808)).